The chain runs to 199 residues: ATP-dependent Clp protease proteolytic subunit (199 aa).

Residue Ser-102 is the Nucleophile of the active site. Residue His-127 is part of the active site.

It belongs to the peptidase S14 family. As to quaternary structure, component of the chloroplastic Clp protease core complex.

It is found in the plastid. The protein localises to the chloroplast stroma. The enzyme catalyses Hydrolysis of proteins to small peptides in the presence of ATP and magnesium. alpha-casein is the usual test substrate. In the absence of ATP, only oligopeptides shorter than five residues are hydrolyzed (such as succinyl-Leu-Tyr-|-NHMec, and Leu-Tyr-Leu-|-Tyr-Trp, in which cleavage of the -Tyr-|-Leu- and -Tyr-|-Trp bonds also occurs).. Its function is as follows. Cleaves peptides in various proteins in a process that requires ATP hydrolysis. Has a chymotrypsin-like activity. Plays a major role in the degradation of misfolded proteins. This Physcomitrium patens (Spreading-leaved earth moss) protein is ATP-dependent Clp protease proteolytic subunit.